Reading from the N-terminus, the 434-residue chain is ATP-dependent RNA helicase SUB2 (434 aa).

Acidic residues predominate over residues 1-16; the sequence is MSGEEDLIDYSDDELN. A disordered region spans residues 1-32; sequence MSGEEDLIDYSDDELNNETTAPASNGKKGDAA. The Q motif signature appears at 50–78; the sequence is TGFRDFLLKPELLRAIADCGFEHPSEVQQ. Residues 81-256 form the Helicase ATP-binding domain; that stretch reads IPQAMLGGDI…RKFMQNPTEH (176 aa). Residue 94-101 coordinates ATP; that stretch reads AKSGLGKT. A DEAD box motif is present at residues 203-206; it reads DECD. The 162-residue stretch at 268-429 folds into the Helicase C-terminal domain; it reads GLQQYYIPLE…EFPKEGIDAS (162 aa).

This sequence belongs to the DEAD box helicase family. DECD subfamily.

Its subcellular location is the nucleus. It catalyses the reaction ATP + H2O = ADP + phosphate + H(+). Its function is as follows. ATP-binding RNA helicase involved in transcription elongation and required for the export of mRNA out of the nucleus. SUB2 also plays a role in pre-mRNA splicing and spliceosome assembly. May be involved in rDNA and telomeric silencing, and maintenance of genome integrity. The polypeptide is ATP-dependent RNA helicase SUB2 (SUB2) (Chaetomium globosum (strain ATCC 6205 / CBS 148.51 / DSM 1962 / NBRC 6347 / NRRL 1970) (Soil fungus)).